The sequence spans 191 residues: Rubrerythrin (191 aa).

The Ferritin-like diiron domain maps to 1-146; sequence MKSLKGSRTE…DFARNIKEGR (146 aa). The Fe(3+) site is built by Glu20, Glu53, Glu94, Glu97, Glu128, His131, Cys158, Cys161, Cys174, and Cys177. Residues 153–191 enclose the Rubredoxin-like domain; it reads ATKWRCRNCGYVHEGTGAPELCPACAHPKAHFELLGINW.

As to quaternary structure, homodimer. Possesses two rubredoxin-like centers and two non-sulfur oxo-bridged di-iron centers per dimer. Fe(3+) serves as cofactor.

The protein localises to the cytoplasm. Functionally, may provide oxidative stress protection via catalytic reduction of intracellular hydrogen peroxide. In Nitratidesulfovibrio vulgaris (strain ATCC 29579 / DSM 644 / CCUG 34227 / NCIMB 8303 / VKM B-1760 / Hildenborough) (Desulfovibrio vulgaris), this protein is Rubrerythrin (rbr).